The chain runs to 439 residues: Cysteine desulfurase-like protein ustD (439 aa).

Residues 1–25 are disordered; that stretch reads MKSVATSSLDDVDKDSVPLGSSING. Residues 120 to 121, asparagine 206, and 255 to 257 each bind pyridoxal 5'-phosphate; these read TT and SWY. At lysine 258 the chain carries N6-(pyridoxal phosphate)lysine.

It belongs to the class-V pyridoxal-phosphate-dependent aminotransferase family. Pyridoxal 5'-phosphate is required as a cofactor.

The protein operates within mycotoxin biosynthesis. Functionally, cysteine desulfurase-like protein; part of the gene cluster that mediates the biosynthesis of the secondary metabolite ustiloxin B, an antimitotic tetrapeptide. First, ustA is processed by the subtilisin-like endoprotease Kex2 that is outside the ustiloxin B gene cluster, at the C-terminal side of Arg-Lys, after transfer to Golgi apparatus through the endoplasmic reticulum (ER). Cleavage by KEX2 generates 16 peptides YAIG-I to YAIG-XVI. To process the precursor peptide further, at least two peptidases are necessary to cleave the N-terminal and C-terminal sides of the Tyr-Ala-Ile-Gly core peptide which serves as backbone for the synthesis of ustiloxin B, through cyclization and modification of the tyrosine with a non-protein coding amino acid, norvaline. One of the two peptidases must be the serine peptidase ustP; and the other pepdidase is probably ustH. Macrocyclization of the core peptide derived from ustA requires the tyrosinase ustQ, as well as the homologous oxidases ustYa and ustYb, and leads to the production of the first cyclization product N-desmethylustiloxin F. For the formation of N-desmethylustiloxin F, three oxidation steps are required, hydroxylation at the benzylic position, hydroxylation at either the aromatic ring of Tyr or beta-position of Ile, and oxidative cyclization. UstQ may catalyze the oxidation of a phenol moiety, whereas the ustYa and ustYb are most likely responsible for the remaining two-step oxidations. N-desmethylustiloxin F is then methylated by ustM to yield ustiloxin F which in turn substrate of the cytochrome P450 monooxygenase ustC which catalyzes the formation of S-deoxyustiloxin H. The flavoprotein monooxygenases ustF1 and ustF2 then participate in the modification of the side chain of S-deoxyustiloxin H, leading to the synthesis of an oxime intermediate, via ustiloxin H. Finally, carboxylative dehydration performed by the cysteine desulfurase-like protein ustD yields ustiloxin B. The chain is Cysteine desulfurase-like protein ustD from Aspergillus flavus (strain ATCC 200026 / FGSC A1120 / IAM 13836 / NRRL 3357 / JCM 12722 / SRRC 167).